The primary structure comprises 89 residues: UPF0335 protein OCAR_5086/OCA5_c28780 (89 aa).

Belongs to the UPF0335 family.

The sequence is that of UPF0335 protein OCAR_5086/OCA5_c28780 from Afipia carboxidovorans (strain ATCC 49405 / DSM 1227 / KCTC 32145 / OM5) (Oligotropha carboxidovorans).